The chain runs to 558 residues: Potassium-transporting ATPase potassium-binding subunit (558 aa).

11 helical membrane passes run 1–21 (MDTLAGILQVASVVLVLVLVH), 58–78 (WPAYLRAVLAFSLVGVLVVYG), 85–105 (FLPYALGLPAVPEGISFNTAV), 130–150 (GLAVQNFVSAAVGIAVAIALV), 179–199 (LSLVTAVVLIAGGVIQNFAGF), 245–265 (PTAWTSAFQVLLMLVIPFSLP), 279–299 (TAIAAVMATIAVASLTALTLF), 374–394 (GLYGMLVLAVIAVFVAGLLVG), 416–436 (ILVTPILVLVGTALSFAIPAV), 484–504 (ALGVAMLLGRFVPIVLVLALA), and 527–547 (FVGLLIGVTVIVTALTYFPVL).

This sequence belongs to the KdpA family. As to quaternary structure, the system is composed of three essential subunits: KdpA, KdpB and KdpC.

It is found in the cell membrane. Its function is as follows. Part of the high-affinity ATP-driven potassium transport (or Kdp) system, which catalyzes the hydrolysis of ATP coupled with the electrogenic transport of potassium into the cytoplasm. This subunit binds the extracellular potassium ions and delivers the ions to the membrane domain of KdpB through an intramembrane tunnel. This is Potassium-transporting ATPase potassium-binding subunit from Clavibacter sepedonicus (Clavibacter michiganensis subsp. sepedonicus).